The sequence spans 240 residues: Ubiquitin domain-containing protein 2 (240 aa).

Residues 1-48 (MGGCVGSHHDSSGSLNENSDGTGVALGRNQPLKREKPKWKSDYPMTDG) form a disordered region. Positions 12–21 (SGSLNENSDG) are enriched in polar residues. Residues 32–41 (LKREKPKWKS) show a composition bias toward basic and acidic residues. A Ubiquitin-like domain is found at 152 to 227 (CQLRLRLSTG…VQVIVSQPPT (76 aa)).

The protein resides in the cytoplasm. The sequence is that of Ubiquitin domain-containing protein 2 (ubtd2) from Danio rerio (Zebrafish).